A 792-amino-acid chain; its full sequence is uncharacterized protein (792 aa).

361–362 (WD) lines the substrate pocket. The active-site Proton donor is E488. Residue 590 to 591 (KQ) coordinates substrate. The tract at residues 753 to 792 (DSPSTIAVRDRKPLLPPPSQPPGREPVSRRHKSLIISAAR) is disordered. A compositionally biased stretch (pro residues) spans 766–776 (LLPPPSQPPGR).

This sequence belongs to the glycosyl hydrolase 65 family.

This is an uncharacterized protein from Mycobacterium leprae (strain TN).